The primary structure comprises 398 residues: Alpha-ketoglutarate-dependent dioxygenase bsc9 (398 aa).

H167 and D169 together coordinate Fe cation. T212 contributes to the 2-oxoglutarate binding site. H365 contacts Fe cation. 2-oxoglutarate is bound at residue R377.

It belongs to the TfdA dioxygenase family. Fe(2+) serves as cofactor.

The protein operates within mycotoxin biosynthesis. Alpha-ketoglutarate dependent dioxygenase; part of the gene cluster that mediates the biosynthesis of the diterpene glucoside brassicicene C. In the first step of the brassicicene C biosynthesis, the bifunctional diterpene synthase bsc8 that possesses both prenyl transferase and terpene cyclase activity, converts isopentenyl diphosphate and dimethylallyl diphosphate into geranylgeranyl diphosphate (GGDP) that is further converted into fusicocca-2,10(14)-diene, the first precursor for brassicicene C. Fusicocca-2,10(14)-diene is then substrate of cytochrome P450 monooxygenase bsc1 for hydroxylation at the C-8 position. Oxidation at C-16 position to aldehyde is then catalyzed by the cytochrome P450 monooyxygenase bsc7, yielding fusicocca-2,10(14)-diene-8-beta,16-diol. Follows the isomerization of the double bond and reduction of aldehyde to alcohol catalyzed by the short-chain dehydrogenase/reductase bsc3 to yield the diol compound fusicocca-1,10(14)-diene-8 beta,16-diol. The next step is the oxidation at the C-3 position of fusicocca-2,10(14)-diene-8-beta,16-diol catalyzed by the alpha-ketoglutarate dependent dioxygenase bsc9, to produce a triol compound. Methylation of the hydroxy group at position 16 is performed by the methyltransferase bsc6. 16-O-methylation is followed by oxidation at the C-13 position to ketone and an alkyl shift of the methyl group leads to brassicicene C. Although the probable acetyltransferase bsc4 is included in the gene cluster, no acetylation reactions are necessary for brassicicene C biosynthesis. However, the fact that brassicicene E, which is a structurally related compound having an acetoxy group at position 12, was previously isolated from another strain of A.brassicicola suggests that the ATCC 96836 strain might also produce a small amount of brassicicene E. The protein is Alpha-ketoglutarate-dependent dioxygenase bsc9 of Alternaria brassicicola (Dark leaf spot agent).